A 238-amino-acid polypeptide reads, in one-letter code: Ribosomal RNA small subunit methyltransferase G (238 aa).

S-adenosyl-L-methionine-binding positions include Gly-77, Phe-82, Ala-128–Glu-129, and Arg-147.

Belongs to the methyltransferase superfamily. RNA methyltransferase RsmG family.

The protein resides in the cytoplasm. Functionally, specifically methylates the N7 position of guanine in position 535 of 16S rRNA. The chain is Ribosomal RNA small subunit methyltransferase G from Exiguobacterium sp. (strain ATCC BAA-1283 / AT1b).